A 201-amino-acid polypeptide reads, in one-letter code: MSRYRGPRFKKIRRLGALPGLTSKRPRSGSDLRNQSRFGKRSQYRIRLEEKQKLRFHYGLTERQLLRYVRIAGKAKGSTGQVLLQLLEMRLDNTLFRLGMASTIPGARQLVNHRHILVNSRIVDIPSYRCKPRDIITTRDEQRSRTLIQNHIDSSPHEELPKHLTLHSFQYKGLVNQIIDSKSIGLKINELLVVEYYSRQT.

Residues 16–37 (GALPGLTSKRPRSGSDLRNQSR) are disordered. The 64-residue stretch at 89-152 (MRLDNTLFRL…RSRTLIQNHI (64 aa)) folds into the S4 RNA-binding domain.

Belongs to the universal ribosomal protein uS4 family. In terms of assembly, part of the 30S ribosomal subunit. Contacts protein S5. The interaction surface between S4 and S5 is involved in control of translational fidelity.

The protein resides in the plastid. The protein localises to the chloroplast. One of the primary rRNA binding proteins, it binds directly to 16S rRNA where it nucleates assembly of the body of the 30S subunit. Functionally, with S5 and S12 plays an important role in translational accuracy. The protein is Small ribosomal subunit protein uS4c (rps4) of Chloranthus spicatus (Chulantree).